A 198-amino-acid chain; its full sequence is Na(+)-translocating NADH-quinone reductase subunit E (198 aa).

The next 6 membrane-spanning stretches (helical) occupy residues 11–31, 39–59, 77–97, 110–130, 140–160, and 176–196; these read SIFI…FLAV, FGLG…NNLV, FLNF…LEMI, GIFL…SFMV, VVYG…LAGI, and LGIT…FSGV.

It belongs to the NqrDE/RnfAE family. Composed of six subunits; NqrA, NqrB, NqrC, NqrD, NqrE and NqrF.

It localises to the cell inner membrane. The catalysed reaction is a ubiquinone + n Na(+)(in) + NADH + H(+) = a ubiquinol + n Na(+)(out) + NAD(+). Its function is as follows. NQR complex catalyzes the reduction of ubiquinone-1 to ubiquinol by two successive reactions, coupled with the transport of Na(+) ions from the cytoplasm to the periplasm. NqrA to NqrE are probably involved in the second step, the conversion of ubisemiquinone to ubiquinol. The chain is Na(+)-translocating NADH-quinone reductase subunit E from Vibrio anguillarum (Listonella anguillarum).